A 526-amino-acid chain; its full sequence is Lysine--tRNA ligase (526 aa).

Mg(2+) contacts are provided by E431 and E438.

The protein belongs to the class-II aminoacyl-tRNA synthetase family. Homodimer. Requires Mg(2+) as cofactor.

It localises to the cytoplasm. It carries out the reaction tRNA(Lys) + L-lysine + ATP = L-lysyl-tRNA(Lys) + AMP + diphosphate. The protein is Lysine--tRNA ligase (lysS) of Chlamydia trachomatis serovar D (strain ATCC VR-885 / DSM 19411 / UW-3/Cx).